We begin with the raw amino-acid sequence, 138 residues long: Large ribosomal subunit protein uL16 (138 aa).

It belongs to the universal ribosomal protein uL16 family. As to quaternary structure, part of the 50S ribosomal subunit.

In terms of biological role, binds 23S rRNA and is also seen to make contacts with the A and possibly P site tRNAs. In Syntrophobacter fumaroxidans (strain DSM 10017 / MPOB), this protein is Large ribosomal subunit protein uL16.